The following is a 192-amino-acid chain: A-type ATP synthase subunit E (192 aa).

Belongs to the V-ATPase E subunit family. In terms of assembly, has multiple subunits with at least A(3), B(3), C, D, E, F, H, I and proteolipid K(x).

Its subcellular location is the cell membrane. In terms of biological role, component of the A-type ATP synthase that produces ATP from ADP in the presence of a proton gradient across the membrane. The polypeptide is A-type ATP synthase subunit E (Methanoculleus marisnigri (strain ATCC 35101 / DSM 1498 / JR1)).